Here is a 289-residue protein sequence, read N- to C-terminus: Transmembrane protein 163 (289 aa).

Positions 1-65 are disordered; it reads MEPAAGIQRR…ESGQFSDGLE (65 aa). The Cytoplasmic portion of the chain corresponds to 1-88; that stretch reads MEPAAGIQRR…HEAQNYRKKA (88 aa). A Phosphoserine modification is found at S11. The span at 16–36 shows a compositional bias: pro residues; the sequence is TVPPPPRGHAPPAAAPGPAPL. The segment at 42–72 is required for interaction with MCOLN1; sequence EPPQLEEERQVRISESGQFSDGLEDRGLLES. S55, S57, and S61 each carry phosphoserine. The helical transmembrane segment at 89–109 threads the bilayer; sequence LWVSWFSIIVTLALAVAAFTV. Topologically, residues 110–116 are extracellular; sequence SVMRYSA. A helical membrane pass occupies residues 117–137; the sequence is SAFGFAFDAILDVLSSAIVLW. At 138 to 150 the chain is on the cytoplasmic side; that stretch reads RYSNAAAVHSAHR. A helical transmembrane segment spans residues 151–171; it reads EYIACVILGVIFLLSSICIVV. Topologically, residues 172 to 187 are extracellular; sequence KAIHDLSTRLLPEVDD. A helical transmembrane segment spans residues 188-208; sequence FLFSVSILSGILCSILAVLKF. Residues 209-217 are Cytoplasmic-facing; sequence MLGKVLTSR. The helical transmembrane segment at 218-238 threads the bilayer; it reads ALITDGFNSLVGGVMGFSILL. The Extracellular portion of the chain corresponds to 239-255; sequence SAEVFKHDSAVWYLDGS. The helical transmembrane segment at 256-276 threads the bilayer; it reads IGVLIGLTIFAYGVKLLIDMV. The Cytoplasmic segment spans residues 277–289; that stretch reads PRVRQTRHYEMFE.

It belongs to the TMEM163 family. As to quaternary structure, homodimer. Interacts with MCOLN1/TRPML1. Interacts with SLC30A1, SLC30A2, SLC30A3 and SLC30A4. In terms of tissue distribution, widely expressed. High expression is detected in brain, lung and testis.

Its subcellular location is the cytoplasmic vesicle. The protein resides in the secretory vesicle. The protein localises to the synaptic vesicle membrane. It localises to the early endosome membrane. It is found in the late endosome membrane. Its subcellular location is the lysosome membrane. The protein resides in the cell membrane. It carries out the reaction Zn(2+)(in) = Zn(2+)(out). In terms of biological role, zinc ion transporter that mediates zinc efflux and plays a crucial role in intracellular zinc homeostasis. Binds the divalent cations Zn(2+), Ni(2+), and to a minor extent Cu(2+). Is a functional modulator of P2X purinoceptors, including P2RX1, P2RX3, P2RX4 and P2RX7. Plays a role in central nervous system development and is required for myelination, and survival and proliferation of oligodendrocytes. This chain is Transmembrane protein 163 (TMEM163), found in Homo sapiens (Human).